The sequence spans 362 residues: Caveolae-associated protein 4 (362 aa).

The segment at 1–24 (MEHNGSASNAGKIHQNRLSSVTED) is disordered. Residues 100–120 (IKDVKARVEKQQVRVTKVETK) are a coiled coil. Phosphoserine occurs at positions 152, 171, and 172. The segment covering 227–255 (PERRERLRQSGERLRQSGERLRQSGERFK) has biased composition (basic and acidic residues). The interval 227-261 (PERRERLRQSGERLRQSGERLRQSGERFKKSISNA) is disordered. Y324 is subject to Phosphotyrosine. A Phosphothreonine modification is found at T334. The residue at position 353 (S353) is a Phosphoserine.

It belongs to the CAVIN family. As to quaternary structure, component of the CAVIN complex composed of CAVIN1, CAVIN2, CAVIN3 and CAVIN4. Interacts with CAVIN1, CAV3, ADRA1A and ADRA1B. Interacts with CAVIN2; this augments the transactivation of NPPA. Interacts with MAPK1 and MAPK3. As to expression, expressed at much higher levels in cardiomyocytes than in non-cardiomyocytes.

The protein localises to the cytoplasm. The protein resides in the myofibril. It is found in the sarcomere. Its subcellular location is the cytosol. It localises to the cell membrane. The protein localises to the sarcolemma. The protein resides in the membrane. It is found in the caveola. In terms of biological role, modulates the morphology of formed caveolae in cardiomyocytes, but is not required for caveolar formation. Facilitates the recruitment of MAPK1/3 to caveolae within cardiomyocytes and regulates alpha-1 adrenergic receptor-induced hypertrophic responses in cardiomyocytes through MAPK1/3 activation. Contributes to proper membrane localization and stabilization of caveolin-3 (CAV3) in cardiomyocytes. Induces RHOA activation and activates NPPA transcription and myofibrillar organization through the Rho/ROCK signaling pathway. The protein is Caveolae-associated protein 4 of Rattus norvegicus (Rat).